The following is a 209-amino-acid chain: MKIQSIFAASFCLLSSISAHAAIQLTVPDEVELILVDNQEVKLESSFFSTTSTLDLENGKHQIVFRYNPVFKQGKDNIIVSSDIIVSTFSAEDKEISFKFPTYNSPEKAKAFNRDLNWELIDKNNNSIPFAQSQLIYNGMQVGRNIQFEVAKFNTTEHPAAFKEGMVTVTHKEIKNEQGDNTAEQMLHYWYEKADQATKERFLKSITNK.

The signal sequence occupies residues 1–21 (MKIQSIFAASFCLLSSISAHA).

It belongs to the UPF0319 family.

The sequence is that of UPF0319 protein VF_1616 from Aliivibrio fischeri (strain ATCC 700601 / ES114) (Vibrio fischeri).